The sequence spans 297 residues: Proline iminopeptidase (297 aa).

Residues 26-131 form the AB hydrolase-1 domain; sequence VLLLHGGPAM…GLLVSNMMAS (106 aa). Ser103 acts as the Nucleophile in catalysis. Asp243 is a catalytic residue. His270 (proton donor) is an active-site residue.

It belongs to the peptidase S33 family. In terms of assembly, monomer.

It catalyses the reaction Release of N-terminal proline from a peptide.. Its function is as follows. Releases the N-terminal proline from various substrates. This chain is Proline iminopeptidase (fpaP), found in Flavobacterium johnsoniae (strain ATCC 17061 / DSM 2064 / JCM 8514 / BCRC 14874 / CCUG 350202 / NBRC 14942 / NCIMB 11054 / UW101) (Cytophaga johnsonae).